The sequence spans 512 residues: tRNA-2-methylthio-N(6)-dimethylallyladenosine synthase (512 aa).

In terms of domain architecture, MTTase N-terminal spans 23–139 (RTYQVRTYGC…LPTLLERARH (117 aa)). 6 residues coordinate [4Fe-4S] cluster: Cys32, Cys68, Cys102, Cys176, Cys180, and Cys183. The Radical SAM core domain maps to 162–398 (RESAYAAWVS…IELQERISLE (237 aa)). One can recognise a TRAM domain in the interval 401–469 (REQVGRAVEL…PHHLIADAPI (69 aa)). The tract at residues 477-512 (AGDAHAAGQKPRTGVGLGMPRIGAPAPSATAEGCGC) is disordered.

It belongs to the methylthiotransferase family. MiaB subfamily. As to quaternary structure, monomer. Requires [4Fe-4S] cluster as cofactor.

The protein localises to the cytoplasm. It carries out the reaction N(6)-dimethylallyladenosine(37) in tRNA + (sulfur carrier)-SH + AH2 + 2 S-adenosyl-L-methionine = 2-methylsulfanyl-N(6)-dimethylallyladenosine(37) in tRNA + (sulfur carrier)-H + 5'-deoxyadenosine + L-methionine + A + S-adenosyl-L-homocysteine + 2 H(+). Catalyzes the methylthiolation of N6-(dimethylallyl)adenosine (i(6)A), leading to the formation of 2-methylthio-N6-(dimethylallyl)adenosine (ms(2)i(6)A) at position 37 in tRNAs that read codons beginning with uridine. This is tRNA-2-methylthio-N(6)-dimethylallyladenosine synthase from Mycolicibacterium smegmatis (strain ATCC 700084 / mc(2)155) (Mycobacterium smegmatis).